The primary structure comprises 89 residues: Small ribosomal subunit protein uS15 (89 aa).

It belongs to the universal ribosomal protein uS15 family. In terms of assembly, part of the 30S ribosomal subunit. Forms a bridge to the 50S subunit in the 70S ribosome, contacting the 23S rRNA.

Functionally, one of the primary rRNA binding proteins, it binds directly to 16S rRNA where it helps nucleate assembly of the platform of the 30S subunit by binding and bridging several RNA helices of the 16S rRNA. Forms an intersubunit bridge (bridge B4) with the 23S rRNA of the 50S subunit in the ribosome. The chain is Small ribosomal subunit protein uS15 from Bartonella henselae (strain ATCC 49882 / DSM 28221 / CCUG 30454 / Houston 1) (Rochalimaea henselae).